The chain runs to 232 residues: Small ribosomal subunit protein uS3 (232 aa).

The region spanning 39-107 is the KH type-2 domain; the sequence is VRQFLTKELQ…PAQINIAEVR (69 aa). The disordered stretch occupies residues 213–232; that stretch reads AANAVEPKGDKPKKQRKGRK.

Belongs to the universal ribosomal protein uS3 family. Part of the 30S ribosomal subunit. Forms a tight complex with proteins S10 and S14.

Its function is as follows. Binds the lower part of the 30S subunit head. Binds mRNA in the 70S ribosome, positioning it for translation. This Vibrio campbellii (strain ATCC BAA-1116) protein is Small ribosomal subunit protein uS3.